The sequence spans 507 residues: FAD-linked oxidoreductase OXR1 (507 aa).

A signal peptide spans 1–21 (MTIKFASLILAGLGLGSGALG). Residues asparagine 34 and asparagine 65 are each glycosylated (N-linked (GlcNAc...) asparagine). Residues 73–245 (YAPPTFKVSV…VSATYKLKPL (173 aa)) form the FAD-binding PCMH-type domain. N-linked (GlcNAc...) asparagine glycans are attached at residues asparagine 263 and asparagine 288.

It belongs to the oxygen-dependent FAD-linked oxidoreductase family. The cofactor is FAD.

It carries out the reaction dihydropyriculol + A = pyriculol + AH2. The enzyme catalyses dihydropyriculariol + A = pyriculariol + AH2. It participates in polyketide biosynthesis. In terms of biological role, FAD-linked oxidoreductase; part of the gene cluster that mediates the biosynthesis of pyriculol and pyriculariol, two heptaketides that induce lesion formation upon application on rice leaves but are dispensable for pathogenicity. The highly reducing polyketide synthase synthesizes the heptaketide backbone of pyriculol and pyriculariol. Pyriculol and pyriculariol contain several hydroxyl moieties and double bonds, so it can be assumed that several reduction steps occur during biosynthesis. These reactions could be executed by PKS19 itself or partly by the tailoring enzymes OXR1, OXR2, RED1, RED2 or RED3, identified within the cluster. The FAD-linked oxidoreductase OXR1 is the only tailoring enzyme for which the function has been determined yet, and is involved in the oxidation of dihydropyriculol and dihydropyriculariol into pyriculol and pyriculariol, respectively. The polypeptide is FAD-linked oxidoreductase OXR1 (Pyricularia oryzae (strain 70-15 / ATCC MYA-4617 / FGSC 8958) (Rice blast fungus)).